The sequence spans 606 residues: Transmembrane 9 superfamily member 1 (606 aa).

Residues 1–27 form the signal peptide; sequence MTVLGYPRSWSCHCLPVLILLLGIGHG. An N-linked (GlcNAc...) asparagine glycan is attached at Asn178. 4 helical membrane passes run 237 to 257, 310 to 330, 339 to 359, and 373 to 393; these read LSIINSMVLVFLLVGFVAVIL, VLGVGAQFLALGTGIIVMALL, GAINSAAILLYALTCCISGYV, and VWNIILTSSLFSVPFFLTWSV. Asn401 carries an N-linked (GlcNAc...) asparagine glycan. 4 consecutive transmembrane segments (helical) span residues 412–432, 469–489, 499–519, and 535–555; these read ILLLLTVWLLVGFPLTVIGGI, VGGFLPFSAISVELYYIFATV, GILFFVFAILLSVGACISIAL, and SVLSVGSTGLFIFLYSVFYYA. Asn559 carries an N-linked (GlcNAc...) asparagine glycan. The helical transmembrane segment at 570-590 threads the bilayer; it reads FGYSLLTGYVFFLMLGTISFF.

This sequence belongs to the nonaspanin (TM9SF) (TC 9.A.2) family.

The protein localises to the lysosome membrane. It localises to the cytoplasmic vesicle. Its subcellular location is the autophagosome membrane. Its function is as follows. Plays an essential role in autophagy. The chain is Transmembrane 9 superfamily member 1 (Tm9sf1) from Mus musculus (Mouse).